A 1163-amino-acid polypeptide reads, in one-letter code: Actin cross-linking toxin VgrG1 (1163 aa).

The 436-residue stretch at 728 to 1163 (TPDFPTHFPK…NPQEWQRIIA (436 aa)) folds into the ACD domain. An ATP-binding site is contributed by 739–743 (SIGIE). Mg(2+)-binding residues include E743 and E805. Position 808 (S808) interacts with ATP. Q889 is a Mg(2+) binding site. R995 contributes to the ATP binding site. Position 1066 (E1066) interacts with Mg(2+).

The protein belongs to the VgrG protein family. As to quaternary structure, interacts with protein VC1417. The cofactor is Mg(2+).

It is found in the secreted. The protein localises to the host cytoplasm. It localises to the host cytosol. Its function is as follows. Part of the type VI secretion system (T6SS) specialized secretion system, which delivers several virulence factors in both prokaryotic and eukaryotic cells during infection. Forms the spike at the tip of the elongating tube probably formed by hemolysin co-regulated protein/Hcp. Allows the delivery of the TseL antibacterial toxin to target cells where it exerts its toxicity. Also acts directly as an actin-directed toxin that catalyzes the covalent cross-linking of host cytoplasmic monomeric actin. Mediates the cross-link between 'Lys-50' of one monomer and 'Glu-270' of another actin monomer, resulting in formation of highly toxic actin oligomers that cause cell rounding. The toxin can be highly efficient at very low concentrations by acting on formin homology family proteins: toxic actin oligomers bind with high affinity to formins and adversely affect both nucleation and elongation abilities of formins, causing their potent inhibition in both profilin-dependent and independent manners. Acts as an acid--amino-acid ligase that transfers the gamma-phosphoryl group of ATP to the 'Glu-270' actin residue, resulting in the formation of an activated acyl phosphate intermediate. This intermediate is further hydrolyzed and the energy of hydrolysis is utilized for the formation of the amide bond between actin subunits. In Vibrio cholerae serotype O1 (strain ATCC 39315 / El Tor Inaba N16961), this protein is Actin cross-linking toxin VgrG1.